A 1022-amino-acid chain; its full sequence is Polyamine-modulated factor 1-binding protein 1 (1022 aa).

5 coiled-coil regions span residues 89–121, 169–281, 312–377, 411–732, and 758–968; these read NKQY…LQAS, EKLH…ACSN, SEDC…LREE, LKKD…SAIQ, and QDDL…KAGN. Basic and acidic residues-rich tracts occupy residues 545-556 and 571-582; these read QKESSKIEEERK and EGQRRLSNAEKE. Residues 545–582 form a disordered region; it reads QKESSKIEEERKHNRQRLQELSSELSEGQRRLSNAEKE.

In terms of tissue distribution, expressed in the testis.

It localises to the cell projection. Its subcellular location is the cilium. It is found in the flagellum. Required for normal spermatogenesis. It functions as a scaffold protein that attaches the sperm head-tail connecting piece to the nuclear envelope, thus maintaining sperm head and tail integrity. May also be involved in the general organization of cellular cytoskeleton. The chain is Polyamine-modulated factor 1-binding protein 1 (Pmfbp1) from Mus musculus (Mouse).